The following is a 424-amino-acid chain: Tyrosine--tRNA ligase (424 aa).

Y37 contributes to the L-tyrosine binding site. A 'HIGH' region motif is present at residues 42-51 (PTADSLHLGH). Position 144 is an N6-acetyllysine (K144). L-tyrosine contacts are provided by Y175 and Q179. Residues 235–239 (KFGKT) carry the 'KMSKS' region motif. Residue K238 coordinates ATP. In terms of domain architecture, S4 RNA-binding spans 357-414 (ADLMQALVDSELQPSRGQARKTIASNAITINGEKQSDPEYFFKEEDRLFGRFTLLRRG).

It belongs to the class-I aminoacyl-tRNA synthetase family. TyrS type 1 subfamily. As to quaternary structure, homodimer.

It is found in the cytoplasm. The enzyme catalyses tRNA(Tyr) + L-tyrosine + ATP = L-tyrosyl-tRNA(Tyr) + AMP + diphosphate + H(+). In terms of biological role, catalyzes the attachment of tyrosine to tRNA(Tyr) in a two-step reaction: tyrosine is first activated by ATP to form Tyr-AMP and then transferred to the acceptor end of tRNA(Tyr). This chain is Tyrosine--tRNA ligase, found in Escherichia coli (strain K12 / DH10B).